The following is a 668-amino-acid chain: DNA ligase (668 aa).

Residues 37 to 41 (DAVYD), 86 to 87 (SM), and E116 each bind NAD(+). Catalysis depends on K118, which acts as the N6-AMP-lysine intermediate. NAD(+)-binding residues include R139, E173, K288, and K312. Zn(2+) is bound by residues C406, C409, C424, and C429. The 79-residue stretch at 590–668 (APDNFFKEKT…EQEAIAKIEK (79 aa)) folds into the BRCT domain.

This sequence belongs to the NAD-dependent DNA ligase family. LigA subfamily. The cofactor is Mg(2+). It depends on Mn(2+) as a cofactor.

The enzyme catalyses NAD(+) + (deoxyribonucleotide)n-3'-hydroxyl + 5'-phospho-(deoxyribonucleotide)m = (deoxyribonucleotide)n+m + AMP + beta-nicotinamide D-nucleotide.. In terms of biological role, DNA ligase that catalyzes the formation of phosphodiester linkages between 5'-phosphoryl and 3'-hydroxyl groups in double-stranded DNA using NAD as a coenzyme and as the energy source for the reaction. It is essential for DNA replication and repair of damaged DNA. This is DNA ligase from Lactobacillus gasseri (strain ATCC 33323 / DSM 20243 / BCRC 14619 / CIP 102991 / JCM 1131 / KCTC 3163 / NCIMB 11718 / NCTC 13722 / AM63).